Here is a 424-residue protein sequence, read N- to C-terminus: Serine hydroxymethyltransferase (424 aa).

(6S)-5,6,7,8-tetrahydrofolate-binding positions include Leu-126 and 130-132 (GHL). Lys-235 bears the N6-(pyridoxal phosphate)lysine mark. 359-361 (SPF) lines the (6S)-5,6,7,8-tetrahydrofolate pocket.

Belongs to the SHMT family. Homodimer. Requires pyridoxal 5'-phosphate as cofactor.

Its subcellular location is the cytoplasm. The catalysed reaction is (6R)-5,10-methylene-5,6,7,8-tetrahydrofolate + glycine + H2O = (6S)-5,6,7,8-tetrahydrofolate + L-serine. It participates in one-carbon metabolism; tetrahydrofolate interconversion. The protein operates within amino-acid biosynthesis; glycine biosynthesis; glycine from L-serine: step 1/1. Catalyzes the reversible interconversion of serine and glycine with tetrahydrofolate (THF) serving as the one-carbon carrier. This reaction serves as the major source of one-carbon groups required for the biosynthesis of purines, thymidylate, methionine, and other important biomolecules. Also exhibits THF-independent aldolase activity toward beta-hydroxyamino acids, producing glycine and aldehydes, via a retro-aldol mechanism. The protein is Serine hydroxymethyltransferase of Prochlorococcus marinus (strain MIT 9303).